The sequence spans 402 residues: S-adenosylmethionine synthase (402 aa).

Histidine 16 provides a ligand contact to ATP. A Mg(2+)-binding site is contributed by aspartate 18. Residue glutamate 44 participates in K(+) binding. Positions 57 and 103 each coordinate L-methionine. The tract at residues 103-113 (QSPDIAQGVDT) is flexible loop. Residues 178–180 (DGK), 249–250 (KF), aspartate 258, 264–265 (RK), alanine 281, and lysine 285 each bind ATP. Aspartate 258 contacts L-methionine. Lysine 289 serves as a coordination point for L-methionine.

It belongs to the AdoMet synthase family. In terms of assembly, homotetramer; dimer of dimers. The cofactor is Mg(2+). It depends on K(+) as a cofactor.

It is found in the cytoplasm. It catalyses the reaction L-methionine + ATP + H2O = S-adenosyl-L-methionine + phosphate + diphosphate. It participates in amino-acid biosynthesis; S-adenosyl-L-methionine biosynthesis; S-adenosyl-L-methionine from L-methionine: step 1/1. In terms of biological role, catalyzes the formation of S-adenosylmethionine (AdoMet) from methionine and ATP. The overall synthetic reaction is composed of two sequential steps, AdoMet formation and the subsequent tripolyphosphate hydrolysis which occurs prior to release of AdoMet from the enzyme. This is S-adenosylmethionine synthase from Mycobacterium sp. (strain JLS).